The following is a 320-amino-acid chain: (+)-corvol ether B synthase/(+)-corvol ether A synthase ((2E,6E)-farnesyl diphosphate cyclizing) (320 aa).

Mg(2+) is bound by residues Asp78 and Asp83. Residues 78–83 (DDLFVD) carry the DDXXXD motif motif. Arg171 is a substrate binding site. Mg(2+) is bound by residues Asn217, Ser221, and Glu225.

It belongs to the terpene synthase family. Requires Mg(2+) as cofactor.

It carries out the reaction (2E,6E)-farnesyl diphosphate + H2O = (+)-corvol ether B + diphosphate. The enzyme catalyses (2E,6E)-farnesyl diphosphate + H2O = (+)-corvol ether A + diphosphate. The protein operates within secondary metabolite biosynthesis; terpenoid biosynthesis. Catalyzes the conversion of (2E,6E)-farnesyl diphosphate (FPP) into (+)-corvol ether A and (+)-corvol ether B via a 1,10-cyclization, which requires isomerization of FPP to nerolidyl diphosphate (NPP) and then abstraction of the pyrophosphate from intermediate NPP leading to a (E,Z)-germacradienyl (helminthogermacradienyl) cation. The preferred substrate is (2E,6E)-farnesyl diphosphate (FPP), however geranyl diphosphate (GPP) is also able to produce small amounts of several acyclic and cyclic monoterpenes, with linalool as the main product. In Kitasatospora setae (strain ATCC 33774 / DSM 43861 / JCM 3304 / KCC A-0304 / NBRC 14216 / KM-6054) (Streptomyces setae), this protein is (+)-corvol ether B synthase/(+)-corvol ether A synthase ((2E,6E)-farnesyl diphosphate cyclizing).